The chain runs to 444 residues: Protein EMP46 (444 aa).

The signal sequence occupies residues 1–46; the sequence is MTTRKTASSLQLLGKITGTKAGTKQKKMNFINGLIWLYMCVWMVHG. The Lumenal segment spans residues 47–408; that stretch reads KVTQKDELKW…YGKQTKGHDE (362 aa). Positions 52–269 constitute an L-type lectin-like domain; it reads DELKWNKGYS…EILKMKLYDG (218 aa). Residue Tyr177 coordinates K(+). Cys196 and Cys230 are oxidised to a cystine. The chain crosses the membrane as a helical span at residues 409–429; it reads IFSKISVWLALLIFIMITLAY. The interval 429–432 is mediates the interactions with COPI and COPII coat complexes; that stretch reads YYMF. Over 430–444 the chain is Cytoplasmic; that stretch reads YMFRINQDIKKVKLL. The short motif at 440-444 is the Di-lysine motif element; that stretch reads KVKLL.

Belongs to the EMP46/EMP47 family. In terms of assembly, interacts with EMP47 in the endoplasmic reticulum membrane in order to be transported to the Golgi apparatus. Interacts with the coatomer proteins COP1, SEC21 and SEC23.

It localises to the golgi apparatus membrane. The protein localises to the endoplasmic reticulum membrane. Functionally, involved in the secretion of glycoproteins and in nucleus architecture and gene silencing. The chain is Protein EMP46 (EMP46) from Saccharomyces cerevisiae (strain ATCC 204508 / S288c) (Baker's yeast).